A 673-amino-acid chain; its full sequence is tRNA uridine 5-carboxymethylaminomethyl modification enzyme MnmG (673 aa).

An FAD-binding site is contributed by 17-22 (GGGHAG). Position 284 to 298 (284 to 298 (GPRYCPSVEDKINRF)) interacts with NAD(+).

Belongs to the MnmG family. As to quaternary structure, homodimer. Heterotetramer of two MnmE and two MnmG subunits. Requires FAD as cofactor.

The protein resides in the cytoplasm. In terms of biological role, NAD-binding protein involved in the addition of a carboxymethylaminomethyl (cmnm) group at the wobble position (U34) of certain tRNAs, forming tRNA-cmnm(5)s(2)U34. This Polaromonas sp. (strain JS666 / ATCC BAA-500) protein is tRNA uridine 5-carboxymethylaminomethyl modification enzyme MnmG.